Here is a 278-residue protein sequence, read N- to C-terminus: 4-hydroxy-tetrahydrodipicolinate reductase (278 aa).

Residues 13–18 (GAAGKM) and 111–113 (GTT) each bind NAD(+). Histidine 167 acts as the Proton donor/acceptor in catalysis. Residue histidine 168 participates in (S)-2,3,4,5-tetrahydrodipicolinate binding. The active-site Proton donor is the lysine 171. Position 177–178 (177–178 (GT)) interacts with (S)-2,3,4,5-tetrahydrodipicolinate.

The protein belongs to the DapB family.

The protein localises to the cytoplasm. It carries out the reaction (S)-2,3,4,5-tetrahydrodipicolinate + NAD(+) + H2O = (2S,4S)-4-hydroxy-2,3,4,5-tetrahydrodipicolinate + NADH + H(+). It catalyses the reaction (S)-2,3,4,5-tetrahydrodipicolinate + NADP(+) + H2O = (2S,4S)-4-hydroxy-2,3,4,5-tetrahydrodipicolinate + NADPH + H(+). It functions in the pathway amino-acid biosynthesis; L-lysine biosynthesis via DAP pathway; (S)-tetrahydrodipicolinate from L-aspartate: step 4/4. Functionally, catalyzes the conversion of 4-hydroxy-tetrahydrodipicolinate (HTPA) to tetrahydrodipicolinate. This Nostoc punctiforme (strain ATCC 29133 / PCC 73102) protein is 4-hydroxy-tetrahydrodipicolinate reductase.